The chain runs to 64 residues: Small ribosomal subunit protein eS17 (64 aa).

This sequence belongs to the eukaryotic ribosomal protein eS17 family.

This Halorubrum lacusprofundi (strain ATCC 49239 / DSM 5036 / JCM 8891 / ACAM 34) protein is Small ribosomal subunit protein eS17.